The following is a 273-amino-acid chain: Putative tyrosine-protein phosphatase H16_A0669 (273 aa).

The N-terminal stretch at 1-15 is a signal peptide; that stretch reads MIKWLQRAGCLSAHA. Cys-169 (phosphocysteine intermediate) is an active-site residue.

The protein belongs to the protein-tyrosine phosphatase family.

It catalyses the reaction O-phospho-L-tyrosyl-[protein] + H2O = L-tyrosyl-[protein] + phosphate. This Cupriavidus necator (strain ATCC 17699 / DSM 428 / KCTC 22496 / NCIMB 10442 / H16 / Stanier 337) (Ralstonia eutropha) protein is Putative tyrosine-protein phosphatase H16_A0669.